Reading from the N-terminus, the 138-residue chain is Acidic phospholipase A2 Ts-A3 (138 aa).

Residues 1–16 (MRTLWIMAVLLLGVEG) form the signal peptide. 7 disulfide bridges follow: C42–C132, C44–C60, C59–C111, C65–C138, C66–C104, C73–C97, and C91–C102. The Ca(2+) site is built by Y43, G45, and G47. H63 is a catalytic residue. D64 is a binding site for Ca(2+). Residue D105 is part of the active site.

Requires Ca(2+) as cofactor. In terms of tissue distribution, expressed by the venom gland.

The protein localises to the secreted. The enzyme catalyses a 1,2-diacyl-sn-glycero-3-phosphocholine + H2O = a 1-acyl-sn-glycero-3-phosphocholine + a fatty acid + H(+). Functionally, snake venom phospholipase A2 (PLA2) that shows a moderate inhibition of ADP-induced human platelet aggregation when tested on platelet rich plasma. Exhibits high hydrolytic activities and prefers the anionic micelles (dPPC with deoxycholate) to the zwitterionic micelles (dPPC with Triton X-100). PLA2 catalyzes the calcium-dependent hydrolysis of the 2-acyl groups in 3-sn-phosphoglycerides. The protein is Acidic phospholipase A2 Ts-A3 of Trimeresurus stejnegeri (Chinese green tree viper).